The chain runs to 254 residues: Alcohol dehydrogenase (254 aa).

Residue 10-33 (FVAGLGGIGLDTSREIVKSGPKNL) coordinates NAD(+). Ser138 contributes to the substrate binding site. Tyr151 acts as the Proton acceptor in catalysis.

The protein belongs to the short-chain dehydrogenases/reductases (SDR) family. Homodimer.

It carries out the reaction a primary alcohol + NAD(+) = an aldehyde + NADH + H(+). It catalyses the reaction a secondary alcohol + NAD(+) = a ketone + NADH + H(+). The protein is Alcohol dehydrogenase (Adh) of Drosophila heteroneura (Fruit fly).